The following is a 434-amino-acid chain: Tol-Pal system protein TolB (434 aa).

Residues 1–28 form the signal peptide; sequence MMNTRVWCKIIGMLALLVWLVSSPSVFA.

Belongs to the TolB family. In terms of assembly, the Tol-Pal system is composed of five core proteins: the inner membrane proteins TolA, TolQ and TolR, the periplasmic protein TolB and the outer membrane protein Pal. They form a network linking the inner and outer membranes and the peptidoglycan layer.

Its subcellular location is the periplasm. In terms of biological role, part of the Tol-Pal system, which plays a role in outer membrane invagination during cell division and is important for maintaining outer membrane integrity. This chain is Tol-Pal system protein TolB, found in Nitrosococcus oceani (strain ATCC 19707 / BCRC 17464 / JCM 30415 / NCIMB 11848 / C-107).